Here is a 119-residue protein sequence, read N- to C-terminus: Ribonuclease P protein component (119 aa).

It belongs to the RnpA family. In terms of assembly, consists of a catalytic RNA component (M1 or rnpB) and a protein subunit.

The enzyme catalyses Endonucleolytic cleavage of RNA, removing 5'-extranucleotides from tRNA precursor.. In terms of biological role, RNaseP catalyzes the removal of the 5'-leader sequence from pre-tRNA to produce the mature 5'-terminus. It can also cleave other RNA substrates such as 4.5S RNA. The protein component plays an auxiliary but essential role in vivo by binding to the 5'-leader sequence and broadening the substrate specificity of the ribozyme. This chain is Ribonuclease P protein component, found in Beutenbergia cavernae (strain ATCC BAA-8 / DSM 12333 / CCUG 43141 / JCM 11478 / NBRC 16432 / NCIMB 13614 / HKI 0122).